The chain runs to 343 residues: NADH-quinone oxidoreductase subunit H (343 aa).

The next 8 helical transmembrane spans lie at 21–41 (WTLVWTILKIAVLIAPILFCV), 95–115 (FILAPILTFSTALVSWAVVPF), 124–144 (VNVGVLFILAMSSLGAYGVLL), 172–192 (MGFTLVPVIMLSGSLNLGDIV), 197–217 (GLWYALPLLPGFFIYFISVVA), 257–277 (IIMVSVLGSLMFLGGWLPPIE), 281–301 (FIPGIVWLILKTGVLIFFFLW), and 317–337 (LGWKVFLPISLAWIFIVGLAM).

This sequence belongs to the complex I subunit 1 family. NDH-1 is composed of 14 different subunits. Subunits NuoA, H, J, K, L, M, N constitute the membrane sector of the complex.

It localises to the cell inner membrane. It carries out the reaction a quinone + NADH + 5 H(+)(in) = a quinol + NAD(+) + 4 H(+)(out). Its function is as follows. NDH-1 shuttles electrons from NADH, via FMN and iron-sulfur (Fe-S) centers, to quinones in the respiratory chain. The immediate electron acceptor for the enzyme in this species is believed to be ubiquinone. Couples the redox reaction to proton translocation (for every two electrons transferred, four hydrogen ions are translocated across the cytoplasmic membrane), and thus conserves the redox energy in a proton gradient. This subunit may bind ubiquinone. The chain is NADH-quinone oxidoreductase subunit H from Magnetococcus marinus (strain ATCC BAA-1437 / JCM 17883 / MC-1).